We begin with the raw amino-acid sequence, 202 residues long: Ras-related protein RABD2c (202 aa).

GTP contacts are provided by residues 15–23 (GDSGVGKSC), 33–40 (YLDSYIST), 63–67 (DTAGQ), 121–124 (NKCD), and 151–153 (SAK). The Effector region signature appears at 37–45 (YISTIGVDF). The segment at 174–202 (ASQPAGGSKPPTVQIRGQPVNQQSGCCSS) is disordered. The span at 192-202 (PVNQQSGCCSS) shows a compositional bias: polar residues. 2 S-geranylgeranyl cysteine lipidation sites follow: Cys-199 and Cys-200.

This sequence belongs to the small GTPase superfamily. Rab family.

It localises to the cell membrane. Its subcellular location is the golgi apparatus. The protein localises to the trans-Golgi network membrane. It is found in the golgi apparatus membrane. In terms of biological role, protein transport. Regulator of membrane traffic from the Golgi apparatus towards the endoplasmic reticulum (ER). The chain is Ras-related protein RABD2c (RABD2C) from Arabidopsis thaliana (Mouse-ear cress).